A 354-amino-acid chain; its full sequence is Selection and upkeep of intraepithelial T-cells protein 10 (354 aa).

An N-terminal signal peptide occupies residues 1 to 52 (MFLRTQMEQSQADIFALIKPHFGVMESSASYLPGFFMTFLLLQTTVLTQAMS). An Ig-like V-type domain is found at 53 to 141 (LDIQINIQVP…TNREKKRSVV (89 aa)). Residues 53-158 (LDIQINIQVP…SEYMSLMSNK (106 aa)) are Extracellular-facing. Cysteine 71 and cysteine 125 are disulfide-bonded. N-linked (GlcNAc...) asparagine glycosylation occurs at asparagine 129. Residues 159–179 (FSCPLTYLFIIIFLNCLKGML) form a helical membrane-spanning segment. The Cytoplasmic portion of the chain corresponds to 180 to 209 (DFCCLKGKPVYFRELINKIKEVLNIKMRAC). The chain crosses the membrane as a helical span at residues 210–230 (CTLIWEFLLIVLYIAFLPFYL). At 231 to 252 (KFRSRASILDDAYPLHSNWLWD) the chain is on the extracellular side. Residues 253 to 273 (ICIVLSVLMIFFTGLSLFLLW) form a helical membrane-spanning segment. The Cytoplasmic segment spans residues 274–354 (TLNCYGQMSY…RLDCSLNWKT (81 aa)).

This sequence belongs to the SKINT family. In terms of tissue distribution, expressed in skin and thymus.

The protein resides in the membrane. May act by engaging a cell surface molecule on immature T-cells in the embryonic thymus. The chain is Selection and upkeep of intraepithelial T-cells protein 10 (Skint10) from Mus musculus (Mouse).